A 337-amino-acid chain; its full sequence is Ferredoxin--NADP reductase (337 aa).

Residues D35, Q43, Y48, A88, F122, D289, and T330 each coordinate FAD.

This sequence belongs to the ferredoxin--NADP reductase type 2 family. As to quaternary structure, homodimer. FAD is required as a cofactor.

The enzyme catalyses 2 reduced [2Fe-2S]-[ferredoxin] + NADP(+) + H(+) = 2 oxidized [2Fe-2S]-[ferredoxin] + NADPH. The protein is Ferredoxin--NADP reductase of Ehrlichia ruminantium (strain Welgevonden).